A 142-amino-acid chain; its full sequence is Transcriptional regulator MraZ (142 aa).

SpoVT-AbrB domains follow at residues 5–47 (EYNH…PMEE) and 76–119 (ANEI…SREK).

The protein belongs to the MraZ family. In terms of assembly, forms oligomers.

The protein localises to the cytoplasm. Its subcellular location is the nucleoid. In Clostridium tetani (strain Massachusetts / E88), this protein is Transcriptional regulator MraZ.